The primary structure comprises 262 residues: Flap endonuclease Xni (262 aa).

Asp-105 provides a ligand contact to Mg(2+). The region spanning 162 to 257 (ERSQFLDLMA…FRVIDSPPEK (96 aa)) is the 5'-3' exonuclease domain. Residues Leu-172, Ala-173, Pro-181, Ile-183, and Ile-186 each contribute to the K(+) site. Residues 185-190 (GIGPKS) are interaction with DNA.

The protein belongs to the Xni family. The cofactor is Mg(2+). K(+) is required as a cofactor.

Has flap endonuclease activity. During DNA replication, flap endonucleases cleave the 5'-overhanging flap structure that is generated by displacement synthesis when DNA polymerase encounters the 5'-end of a downstream Okazaki fragment. In Shewanella baltica (strain OS155 / ATCC BAA-1091), this protein is Flap endonuclease Xni.